The chain runs to 430 residues: Meiotically up-regulated gene 132 protein (430 aa).

The protein belongs to the UPF0300 family.

The protein localises to the mitochondrion. Has a role in meiosis. This chain is Meiotically up-regulated gene 132 protein (mug132), found in Schizosaccharomyces pombe (strain 972 / ATCC 24843) (Fission yeast).